The primary structure comprises 329 residues: NAD(+) hydrolase TcpA (329 aa).

The MPN domain occupies 5-134 (VSISYLALEQ…ADCVRFYTVR (130 aa)). The TIR domain maps to 192 to 324 (FEYDVFICHA…YVVNEILRVL (133 aa)). Residues 201–202 (AH) and Ser-231 each bind NAD(+). Glu-267 is an active-site residue.

The enzyme catalyses NAD(+) + H2O = ADP-D-ribose + nicotinamide + H(+). Its function is as follows. NAD(+) hydrolase (NADase) that catalyzes cleavage of NAD(+) into ADP-D-ribose (ADPR) and nicotinamide. The sequence is that of NAD(+) hydrolase TcpA from Theionarchaea archaeon (strain DG-70-1).